We begin with the raw amino-acid sequence, 1272 residues long: RING finger protein PFE0100w (1272 aa).

The tract at residues 216–260 is disordered; that stretch reads INKINDVSNNDPKKDNNEKNTSSNNITHNNYNDISNNNNNNNNIN. Positions 234–260 are enriched in low complexity; sequence KNTSSNNITHNNYNDISNNNNNNNNIN. One copy of the CHCR repeat lies at 608–752; that stretch reads YIQTINYLET…GYKFIKYYPQ (145 aa). Residues 771–791 traverse the membrane as a helical segment; the sequence is IFIPLFLDNIDFLFMFIVKFL. Disordered stretches follow at residues 842–862 and 908–970; these read NQNH…NNSQ and ENQT…IINK. Composition is skewed to low complexity over residues 850-861 and 909-956; these read SDSHNLSDDNNS and NQTN…IQTN. The span at 957–967 shows a compositional bias: polar residues; the sequence is KQKGNSTTNKI. A coiled-coil region spans residues 1146–1182; the sequence is MNDMNKNINDKCIEIEKDKKELEKIKKKQLKKKYNFY. An RING-type; atypical zinc finger spans residues 1189-1224; the sequence is CSICKEILSVPMIHFLCKHSYHSYCLKDNNVCILCH.

It localises to the membrane. This Plasmodium falciparum (isolate 3D7) protein is RING finger protein PFE0100w.